Consider the following 365-residue polypeptide: Casein kinase I homolog hhp1 (365 aa).

A Protein kinase domain is found at 11-279; it reads YRIGRKIGSG…YLRKLFRDLF (269 aa). ATP is bound by residues 17–25 and K40; that span reads IGSGSFGDI. D130 serves as the catalytic Proton acceptor. The span at 301-311 shows a compositional bias: low complexity; sequence DQQHQQQLQQQ. The interval 301–365 is disordered; that stretch reads DQQHQQQLQQ…TGAQYINRPN (65 aa). A compositionally biased stretch (polar residues) spans 343-365; it reads INTTVPVINDPSATGAQYINRPN.

The protein belongs to the protein kinase superfamily. CK1 Ser/Thr protein kinase family. Casein kinase I subfamily.

It localises to the nucleus. It carries out the reaction L-seryl-[protein] + ATP = O-phospho-L-seryl-[protein] + ADP + H(+). The enzyme catalyses L-threonyl-[protein] + ATP = O-phospho-L-threonyl-[protein] + ADP + H(+). Its function is as follows. Involved in DNA repair. Has a probable role in repairing alkylated DNA and may regulate the activity of protein(s) involved in double strand break repair caused by gamma rays. The polypeptide is Casein kinase I homolog hhp1 (hhp1) (Schizosaccharomyces pombe (strain 972 / ATCC 24843) (Fission yeast)).